We begin with the raw amino-acid sequence, 204 residues long: Large ribosomal subunit protein bL25 (204 aa).

It belongs to the bacterial ribosomal protein bL25 family. CTC subfamily. As to quaternary structure, part of the 50S ribosomal subunit; part of the 5S rRNA/L5/L18/L25 subcomplex. Contacts the 5S rRNA. Binds to the 5S rRNA independently of L5 and L18.

Functionally, this is one of the proteins that binds to the 5S RNA in the ribosome where it forms part of the central protuberance. The chain is Large ribosomal subunit protein bL25 from Pseudomonas syringae pv. syringae (strain B728a).